The chain runs to 425 residues: Enolase (425 aa).

Position 163 (Q163) interacts with (2R)-2-phosphoglycerate. Catalysis depends on E205, which acts as the Proton donor. 3 residues coordinate Mg(2+): D242, E285, and D312. (2R)-2-phosphoglycerate is bound by residues K337, R366, S367, and K388. K337 (proton acceptor) is an active-site residue.

It belongs to the enolase family. Requires Mg(2+) as cofactor.

It localises to the cytoplasm. The protein resides in the secreted. Its subcellular location is the cell surface. It carries out the reaction (2R)-2-phosphoglycerate = phosphoenolpyruvate + H2O. Its pathway is carbohydrate degradation; glycolysis; pyruvate from D-glyceraldehyde 3-phosphate: step 4/5. In terms of biological role, catalyzes the reversible conversion of 2-phosphoglycerate (2-PG) into phosphoenolpyruvate (PEP). It is essential for the degradation of carbohydrates via glycolysis. This chain is Enolase, found in Rhodospirillum rubrum (strain ATCC 11170 / ATH 1.1.1 / DSM 467 / LMG 4362 / NCIMB 8255 / S1).